The following is a 722-amino-acid chain: Biotin--protein ligase (722 aa).

The interval 27–93 (KELGKASDKQ…EPAADGDPGL (67 aa)) is disordered. The segment covering 46-55 (ASPEAQPAQG) has biased composition (low complexity). Ser295 carries the post-translational modification Phosphoserine. Residues 459-648 (TRLGKVILFA…VLEKLIDRFQ (190 aa)) form the BPL/LPL catalytic domain.

The protein belongs to the biotin--protein ligase family. Monomer.

The protein localises to the cytoplasm. It localises to the mitochondrion. It catalyses the reaction apo-[methylmalonyl-CoA:pyruvate carboxytransferase] + biotin + ATP = holo-[methylmalonyl-CoA:pyruvate carboxytransferase] + AMP + diphosphate + H(+). It carries out the reaction apo-[propionyl-CoA:carbon-dioxide ligase (ADP-forming)] + biotin + ATP = holo-[propionyl-CoA:carbon-dioxide ligase (ADP-forming)] + AMP + diphosphate + H(+). The catalysed reaction is apo-[3-methylcrotonoyl-CoA:carbon-dioxide ligase (ADP-forming)] + biotin + ATP = holo-[3-methylcrotonoyl-CoA:carbon-dioxide ligase (ADP-forming)] + AMP + diphosphate + H(+). The enzyme catalyses biotin + L-lysyl-[protein] + ATP = N(6)-biotinyl-L-lysyl-[protein] + AMP + diphosphate + H(+). Functionally, biotin--protein ligase catalyzing the biotinylation of the 4 biotin-dependent carboxylases acetyl-CoA-carboxylase, pyruvate carboxylase, propionyl-CoA carboxylase, and methylcrotonyl-CoA carboxylase. The sequence is that of Biotin--protein ligase from Mus musculus (Mouse).